The sequence spans 629 residues: Interleukin-23 receptor (629 aa).

Residues 1-23 (MNQVTIQWDAVIALYILFSWCHG) form the signal peptide. At 24–355 (GITNINCSGH…LTSDNRGDIG (332 aa)) the chain is on the extracellular side. Asn29 carries an N-linked (GlcNAc...) asparagine; partial glycan. N-linked (GlcNAc...) asparagine glycans are attached at residues Asn47, Asn81, and Asn141. Fibronectin type-III domains are found at residues 127 to 217 (IPDE…LDDI) and 219 to 318 (IPSA…TPET). N-linked (GlcNAc...) (high mannose) asparagine glycosylation is present at Asn180. 2 N-linked (GlcNAc...) asparagine glycosylation sites follow: Asn232 and Asn262. N-linked (GlcNAc...) asparagine; partial glycosylation is present at Asn273. The chain crosses the membrane as a helical span at residues 356-376 (LLLGMIVFAVMLSILSLIGIF). Over 377–629 (NRSFRTGIKR…HFNRISLLEK (253 aa)) the chain is Cytoplasmic.

The protein belongs to the type I cytokine receptor family. Type 2 subfamily. In terms of assembly, heterodimer with IL12RB1. In presence of IL23, the heterodimer forms the IL23 receptor. Interacts with JAK2 and in presence of IL23 with STAT3. Post-translationally, phosphorylated in response to IL23. In terms of tissue distribution, expressed by monocytes, Th1, Th0, NK and dendritic cells. Isoform 1 is specifically expressed in NK cells.

Its subcellular location is the cell membrane. Its function is as follows. Associates with IL12RB1 to form the interleukin-23 receptor. Binds IL23 and mediates T-cells, NK cells and possibly certain macrophage/myeloid cells stimulation probably through activation of the Jak-Stat signaling cascade. IL23 functions in innate and adaptive immunity and may participate in acute response to infection in peripheral tissues. IL23 may be responsible for autoimmune inflammatory diseases and be important for tumorigenesis. In Homo sapiens (Human), this protein is Interleukin-23 receptor (IL23R).